A 207-amino-acid polypeptide reads, in one-letter code: Probable flagellin 2 (207 aa).

A propeptide spanning residues 1-14 (MRVGSRKLRRDEKG) is cleaved from the precursor.

The protein belongs to the archaeal flagellin family.

The protein localises to the archaeal flagellum. Its function is as follows. Flagellin is the subunit protein which polymerizes to form the filaments of archaeal flagella. This Archaeoglobus fulgidus (strain ATCC 49558 / DSM 4304 / JCM 9628 / NBRC 100126 / VC-16) protein is Probable flagellin 2 (flaB2).